Consider the following 510-residue polypeptide: Peroxidase 2 (510 aa).

Positions 1-19 (MRLTYLPLFAGIAIQSASA) are cleaved as a signal peptide. Residues 20–58 (LPDFFKSSVLKPRRTNSLLINPDAQPDLPTAQQASTAAA) constitute a propeptide that is removed on maturation. The active-site Proton acceptor is the aspartate 228. Histidine 362 contributes to the heme binding site.

As to quaternary structure, homodimer. Heme b serves as cofactor.

Functionally, peroxidase capable of degrading beta-carotene. The chain is Peroxidase 2 from Mycetinis scorodonius (Garlic mushroom).